The following is a 221-amino-acid chain: Histone H1C (221 aa).

Disordered stretches follow at residues 1–43 (MSDP…PPVS) and 113–221 (AAKK…AKKA). The H15 domain occupies 38–112 (THPPVSEMVF…GALGSFKLPA (75 aa)). 2 stretches are compositionally biased toward basic residues: residues 141-167 (KVKK…KTTK) and 175-221 (AAKK…AKKA).

It belongs to the histone H1/H5 family.

The protein localises to the nucleus. It is found in the chromosome. Functionally, histones H1 are necessary for the condensation of nucleosome chains into higher-order structures. In Chironomus tentans (Midge), this protein is Histone H1C.